A 100-amino-acid polypeptide reads, in one-letter code: uncharacterized protein (100 aa).

Transmembrane regions (helical) follow at residues 7 to 28 (TLIG…LLSL), 38 to 60 (AQLS…ILII), and 65 to 87 (LSAL…ANGV).

The protein localises to the cell membrane. This is an uncharacterized protein from Archaeoglobus fulgidus (strain ATCC 49558 / DSM 4304 / JCM 9628 / NBRC 100126 / VC-16).